The following is a 436-amino-acid chain: GTPase Der (436 aa).

EngA-type G domains follow at residues Pro4 to Ser167 and Ile176 to Lys351. GTP contacts are provided by residues Gly10–Ser17, Asp57–Ile61, Asn119–Asp122, Gly182–Ser189, Asp229–Met233, and Asn294–Asp297. Residues Lys352–Asn436 form the KH-like domain.

It belongs to the TRAFAC class TrmE-Era-EngA-EngB-Septin-like GTPase superfamily. EngA (Der) GTPase family. In terms of assembly, associates with the 50S ribosomal subunit.

In terms of biological role, GTPase that plays an essential role in the late steps of ribosome biogenesis. In Staphylococcus epidermidis (strain ATCC 35984 / DSM 28319 / BCRC 17069 / CCUG 31568 / BM 3577 / RP62A), this protein is GTPase Der.